The primary structure comprises 85 residues: Large ribosomal subunit protein bL27 (85 aa).

The protein belongs to the bacterial ribosomal protein bL27 family.

The polypeptide is Large ribosomal subunit protein bL27 (Azobacteroides pseudotrichonymphae genomovar. CFP2).